The following is a 193-amino-acid chain: dCTP deaminase (193 aa).

DCTP-binding positions include 110–115, D128, 136–138, Y171, K178, and Q182; these read RSSLAR and VLE. Residue E138 is the Proton donor/acceptor of the active site. A disordered region spans residues 169 to 193; that stretch reads RPYNRRQDAKYRDQQGAVASRIDKD.

It belongs to the dCTP deaminase family. Homotrimer.

The enzyme catalyses dCTP + H2O + H(+) = dUTP + NH4(+). The protein operates within pyrimidine metabolism; dUMP biosynthesis; dUMP from dCTP (dUTP route): step 1/2. Catalyzes the deamination of dCTP to dUTP. This is dCTP deaminase from Salmonella arizonae (strain ATCC BAA-731 / CDC346-86 / RSK2980).